Reading from the N-terminus, the 528-residue chain is Capsule biosynthesis protein CapD proenzyme (528 aa).

The N-terminal stretch at 1–26 (MNSFKWGKKIILFCLIVSLMGGIGVS) is a signal peptide. Threonine 352 (nucleophile) is an active-site residue. Residues threonine 352, 429–432 (GGNR), and arginine 520 each bind poly-gamma-D-glutamate.

This sequence belongs to the gamma-glutamyltransferase family. As to quaternary structure, this enzyme consists of two polypeptide chains, which are synthesized in precursor form from a single polypeptide. Post-translationally, cleaved by autocatalysis into a large and a small subunit.

It functions in the pathway capsule biogenesis; capsule polysaccharide biosynthesis. In terms of biological role, transpeptidase that cleaves the poly-gamma-D-glutamate capsule and catalyzes the formation of an amide bond with the side-chain amino group of meso-diaminopimelic acid (m-DAP) in the peptidoglycan scaffold. Degradation of the high-molecular weight capsule (H-capsule) to the lower-molecular weight capsule (L-capsule), which is released from the bacterial cell surface. The production of L-capsule is essential to mediate escape from host defenses. This is Capsule biosynthesis protein CapD proenzyme (capD) from Bacillus anthracis.